The following is a 176-amino-acid chain: Cell division control protein 31 (176 aa).

The span at 1–12 (MFANARAKRRSR) shows a compositional bias: basic residues. The disordered stretch occupies residues 1–21 (MFANARAKRRSRASSPTPARL). 4 consecutive EF-hand domains span residues 34 to 69 (EQRQ…LGFN), 70 to 105 (AEKS…KIVE), 107 to 142 (DPLE…LNEN), and 143 to 176 (IDDQ…MDEA). Residues Asp-47, Asp-49, Asp-51, and Glu-58 each contribute to the Ca(2+) site. The Ca(2+) site is built by Asp-156, Asp-158, Asp-160, Glu-162, and Glu-167.

It belongs to the centrin family. In terms of assembly, component of the spindle pole body (SPB), acting as the connector of microtubule arrays in the cytoplasm and the nucleoplasm, is involved in nuclear positioning before chromosome segregation, SPB separation, spindle formation, chromosome segregation, nuclear migration into the bud, nuclear reorientation after cytokinesis and nuclear fusion during conjugation. The SPB half-bridge, which is tightly associated with the cytoplasmic side of the nuclear envelope and the SPB, is playing a key role as the starting structure for and in the initiation of SPB duplication in G1. Within the complex, interacts with sad1.

Its subcellular location is the nucleus. Required for the proper coordination between exit from mitosis and the initiation of septation. Has a role in bipolar spindle formation during spindle pole body (SPB) duplication. Required for the localization of sad1 to the SPB. The protein is Cell division control protein 31 (cdc31) of Schizosaccharomyces pombe (strain 972 / ATCC 24843) (Fission yeast).